The sequence spans 89 residues: Large ribosomal subunit protein bL27 (89 aa).

This sequence belongs to the bacterial ribosomal protein bL27 family.

The protein is Large ribosomal subunit protein bL27 of Afipia carboxidovorans (strain ATCC 49405 / DSM 1227 / KCTC 32145 / OM5) (Oligotropha carboxidovorans).